Consider the following 170-residue polypeptide: IMPACT family member YDL177C (170 aa).

The interval 79-98 (KKKGNKANKSNNSHVNKSRN) is disordered.

Belongs to the IMPACT family.

The chain is IMPACT family member YDL177C from Saccharomyces cerevisiae (strain ATCC 204508 / S288c) (Baker's yeast).